Consider the following 950-residue polypeptide: General transcription factor II-I repeat domain-containing protein 2 (950 aa).

2 GTF2I-like repeats span residues 100-194 and 324-418; these read QVDS…QPGG and LSSL…SNVG.

Belongs to the TFII-I family.

Its subcellular location is the nucleus. In Bos taurus (Bovine), this protein is General transcription factor II-I repeat domain-containing protein 2 (GTF2IRD2).